Here is a 709-residue protein sequence, read N- to C-terminus: Tyrosine-protein phosphatase cdc-14 (709 aa).

One can recognise a Tyrosine-protein phosphatase domain in the interval 196-354; it reads DFNWIIPGKI…QKFCWSLSQS (159 aa). Residue cysteine 295 is the Phosphocysteine intermediate of the active site. The Nuclear localization signal signature appears at 366-371; sequence KRNVRR. Residues 372-381 carry the Nuclear export signal motif; it reads LVNQVDDINL. Disordered stretches follow at residues 403–541, 573–594, and 628–661; these read VQVQ…LTRT, RYLS…GTSP, and ESKP…PYPS. Over residues 404-413 the composition is skewed to polar residues; sequence QVQNGRSTAP. Low complexity predominate over residues 463 to 479; it reads TTSPNSSSSRRFVKSST. 2 stretches are compositionally biased toward polar residues: residues 480–490 and 501–521; these read PQMTVPSQAYL and PSKN…TPNG. Over residues 526–541 the composition is skewed to low complexity; that stretch reads RTRNSSGNTTSTLTRT. Polar residues predominate over residues 639-649; sequence PGTSKSTSSLK.

It belongs to the protein-tyrosine phosphatase family. Non-receptor class CDC14 subfamily.

It is found in the cytoplasm. The protein localises to the cytoskeleton. The protein resides in the microtubule organizing center. Its subcellular location is the centrosome. It localises to the spindle. It is found in the midbody. The protein localises to the nucleus. It carries out the reaction O-phospho-L-tyrosyl-[protein] + H2O = L-tyrosyl-[protein] + phosphate. Its activity is regulated as follows. Inhibited by sodium orthovanadate. Weakly inhibited by sodium fluoride and okadaic acid. In terms of biological role, protein phosphatase that negatively regulates the G1-to-S phase transition to inhibit the cell cycle and establish quiescence in cells of multiple lineages including vulval, hypodermal and intestinal. Promotes nuclear accumulation and activity of the cyclin-dependent kinase inhibitor cki-1 which leads to inhibition of G1 progression during vulval tissue development. Has been shown to not be required for cytokinesis. However, in the embryo, in a contrasting study, has been shown to act as a regulator of central spindle formation and cytokinesis, and may be required for localization of the spindle component zen-4, and its interacting partner air-2 at the spindle during late cell divisions. Main regulator of cell cycle arrest in vulval precursor cells. The sequence is that of Tyrosine-protein phosphatase cdc-14 from Caenorhabditis elegans.